A 399-amino-acid chain; its full sequence is S-adenosylmethionine synthase (399 aa).

His-15 is an ATP binding site. Asp-17 lines the Mg(2+) pocket. Glu-43 contributes to the K(+) binding site. 2 residues coordinate L-methionine: Glu-56 and Gln-99. The tract at residues 99-109 is flexible loop; that stretch reads QSPDIAGGVDH. ATP contacts are provided by residues 175-177, 242-243, Asp-251, 257-258, Ala-274, and Lys-278; these read DAK, RF, and RK. Asp-251 lines the L-methionine pocket. L-methionine is bound at residue Lys-282.

The protein belongs to the AdoMet synthase family. Homotetramer; dimer of dimers. It depends on Mg(2+) as a cofactor. K(+) serves as cofactor.

Its subcellular location is the cytoplasm. It carries out the reaction L-methionine + ATP + H2O = S-adenosyl-L-methionine + phosphate + diphosphate. It participates in amino-acid biosynthesis; S-adenosyl-L-methionine biosynthesis; S-adenosyl-L-methionine from L-methionine: step 1/1. Functionally, catalyzes the formation of S-adenosylmethionine (AdoMet) from methionine and ATP. The overall synthetic reaction is composed of two sequential steps, AdoMet formation and the subsequent tripolyphosphate hydrolysis which occurs prior to release of AdoMet from the enzyme. This is S-adenosylmethionine synthase from Lactobacillus helveticus (strain DPC 4571).